Consider the following 109-residue polypeptide: UPF0060 membrane protein PCC8801_1733 (109 aa).

Transmembrane regions (helical) follow at residues 7 to 27 (LLYF…VWLW), 36 to 56 (YALL…LQTA), 58 to 78 (FGRV…LWGW), and 87 to 107 (SYDW…MYAP).

Belongs to the UPF0060 family.

The protein localises to the cell inner membrane. In Rippkaea orientalis (strain PCC 8801 / RF-1) (Cyanothece sp. (strain PCC 8801)), this protein is UPF0060 membrane protein PCC8801_1733.